A 252-amino-acid polypeptide reads, in one-letter code: 5-oxoprolinase subunit A 1 (252 aa).

This sequence belongs to the LamB/PxpA family. In terms of assembly, forms a complex composed of PxpA, PxpB and PxpC.

It carries out the reaction 5-oxo-L-proline + ATP + 2 H2O = L-glutamate + ADP + phosphate + H(+). In terms of biological role, catalyzes the cleavage of 5-oxoproline to form L-glutamate coupled to the hydrolysis of ATP to ADP and inorganic phosphate. This Pseudomonas putida (strain ATCC 47054 / DSM 6125 / CFBP 8728 / NCIMB 11950 / KT2440) protein is 5-oxoprolinase subunit A 1.